The primary structure comprises 250 residues: Small ribosomal subunit protein uS2 (250 aa).

Belongs to the universal ribosomal protein uS2 family.

This chain is Small ribosomal subunit protein uS2, found in Albidiferax ferrireducens (strain ATCC BAA-621 / DSM 15236 / T118) (Rhodoferax ferrireducens).